A 392-amino-acid polypeptide reads, in one-letter code: Large ribosomal subunit protein uL3 (392 aa).

The protein belongs to the universal ribosomal protein uL3 family. As to quaternary structure, component of the large ribosomal subunit (LSU). Mature N.crassa ribosomes consist of a small (40S) and a large (60S) subunit. The 40S small subunit contains 1 molecule of ribosomal RNA (18S rRNA) and at least 32 different proteins. The large 60S subunit contains 3 rRNA molecules (26S, 5.8S and 5S rRNA) and at least 42 different proteins.

The protein localises to the cytoplasm. In terms of biological role, component of the ribosome, a large ribonucleoprotein complex responsible for the synthesis of proteins in the cell. The small ribosomal subunit (SSU) binds messenger RNAs (mRNAs) and translates the encoded message by selecting cognate aminoacyl-transfer RNA (tRNA) molecules. The large subunit (LSU) contains the ribosomal catalytic site termed the peptidyl transferase center (PTC), which catalyzes the formation of peptide bonds, thereby polymerizing the amino acids delivered by tRNAs into a polypeptide chain. The nascent polypeptides leave the ribosome through a tunnel in the LSU and interact with protein factors that function in enzymatic processing, targeting, and the membrane insertion of nascent chains at the exit of the ribosomal tunnel. This Neurospora crassa (strain ATCC 24698 / 74-OR23-1A / CBS 708.71 / DSM 1257 / FGSC 987) protein is Large ribosomal subunit protein uL3 (rpl-3).